The sequence spans 141 residues: Translation initiation factor IF-1, chloroplastic (141 aa).

A chloroplast-targeting transit peptide spans M1–C46. The disordered stretch occupies residues A49–G69. One can recognise an S1-like domain in the interval K63–S138.

This sequence belongs to the IF-1 family. Component of the 30S ribosomal translation pre-initiation complex which assembles on the 30S ribosome in the order IF-2 and IF-3, IF-1 and N-formylmethionyl-tRNA(fMet); mRNA recruitment can occur at any time during PIC assembly.

Its subcellular location is the plastid. It is found in the chloroplast. Functionally, one of the essential components for the initiation of protein synthesis. Stabilizes the binding of IF-2 and IF-3 on the 30S subunit to which N-formylmethionyl-tRNA(fMet) subsequently binds. Helps modulate mRNA selection, yielding the 30S pre-initiation complex (PIC). Upon addition of the 50S ribosomal subunit IF-1, IF-2 and IF-3 are released leaving the mature 70S translation initiation complex. The chain is Translation initiation factor IF-1, chloroplastic from Arabidopsis thaliana (Mouse-ear cress).